The following is a 588-amino-acid chain: Pre-mRNA 3'-end-processing factor FIP1 (588 aa).

Over residues 1–10 (MSAGEVERLV) the composition is skewed to basic and acidic residues. 3 disordered regions span residues 1–81 (MSAG…EDDV), 223–291 (QGRT…ESPD), and 334–588 (VDNN…TPAE). Positions 1-96 (MSAGEVERLV…DIKTGAPQYG (96 aa)) are sufficient for interaction with PAPOLA. The tract at residues 1–341 (MSAGEVERLV…TAVDNNFSKP (341 aa)) is necessary for stimulating PAPOLA activity. Acidic residues-rich tracts occupy residues 19–40 (GDEE…EEEN) and 66–80 (TEDD…DEDD). Residues serine 70, serine 72, and serine 74 each carry the phosphoserine modification. A sufficient for interaction with CPSF4 region spans residues 122-228 (KGVDLDAPGS…FKVQQGRTGN (107 aa)). Over residues 259-270 (STSSQSQTSTAS) the composition is skewed to low complexity. The span at 280–291 (WQDRYGRAESPD) shows a compositional bias: basic and acidic residues. Serine 289 carries the post-translational modification Phosphoserine. Residues 340 to 398 (KPPPFFPPGAPPTHLPPPPFLPPPPTVSTAPPLIPPPGIPITVPPPGFPPPPGAPPPSL) show a composition bias toward pro residues. Phosphotyrosine is present on tyrosine 420. The segment at 437–588 (SLVDTSKQWD…QESTEATPAE (152 aa)) is sufficient for interaction with CPSF1 and CSTF3. The segment covering 448-486 (YARREKDRDRERDRDRERDRDRDRERERTRERERERDHS) has biased composition (basic and acidic residues). The interval 451-484 (REKDRDRERDRDRERDRDRDRERERTRERERERD) is arg/Asp/Glu-rich domain. Serine 486 carries the post-translational modification Phosphoserine. Threonine 488 is subject to Phosphothreonine. 2 positions are modified to phosphoserine: serine 490 and serine 494. Basic and acidic residues predominate over residues 495 to 522 (DEERYRYREYAERGYERHRASREKEERH). Residues 536 to 545 (KSSRSNSRRR) show a composition bias toward basic residues. Position 548 is a phosphoserine (serine 548). The segment covering 554-564 (HRRHKHKKSKR) has biased composition (basic residues).

It belongs to the FIP1 family. As to quaternary structure, component of the cleavage and polyadenylation specificity factor (CPSF) complex, composed of CPSF1, CPSF2, CPSF3, CPSF4 and FIP1L1. Found in a complex with CPSF1, FIP1L1 and PAPOLA. Interacts with CPSF1, CPSF4, CSTF2 and CSTF3. Interacts with AHCYL1 (when phosphorylated); the interaction is direct and associates AHCYL1 with the CPSF complex and RNA. Interacts with PAPOLA; the interaction seems to be increased by the interaction with AHCYL1. Interacts with NUDT21/CPSF5; this interaction occurs in a RNA sequence-specific manner. Interacts (preferentially via unphosphorylated form and Arg/Glu/Asp-rich domain) with CPSF6 (via Arg/Ser-rich domain); this interaction mediates, at least in part, the interaction between the CFIm and CPSF complexes and may be inhibited by CPSF6 hyper-phosphorylation. Interacts (preferentially via unphosphorylated form and Arg/Asp/Glu-rich domain) with CPSF7 (via Arg/Ser-rich domain); this interaction mediates, at least in part, the interaction between the CFIm and CPSF complexes and may be inhibited by CPSF7 hyper-phosphorylation.

It localises to the nucleus. Functionally, component of the cleavage and polyadenylation specificity factor (CPSF) complex that plays a key role in pre-mRNA 3'-end formation, recognizing the AAUAAA signal sequence and interacting with poly(A) polymerase and other factors to bring about cleavage and poly(A) addition. FIP1L1 contributes to poly(A) site recognition and stimulates poly(A) addition. Binds to U-rich RNA sequence elements surrounding the poly(A) site. May act to tether poly(A) polymerase to the CPSF complex. This is Pre-mRNA 3'-end-processing factor FIP1 (FIP1L1) from Pongo abelii (Sumatran orangutan).